Consider the following 301-residue polypeptide: Ornithine carbamoyltransferase (301 aa).

Carbamoyl phosphate-binding positions include 47-50, Gln74, Arg98, and 125-128; these read STRT and HPCQ. L-ornithine contacts are provided by residues Asn156, Asp220, and 224-225; that span reads SM. Residues 260-261 and Arg288 contribute to the carbamoyl phosphate site; that span reads CL.

Belongs to the aspartate/ornithine carbamoyltransferase superfamily. OTCase family.

The protein resides in the cytoplasm. It catalyses the reaction carbamoyl phosphate + L-ornithine = L-citrulline + phosphate + H(+). It functions in the pathway amino-acid biosynthesis; L-arginine biosynthesis; L-arginine from L-ornithine and carbamoyl phosphate: step 1/3. Reversibly catalyzes the transfer of the carbamoyl group from carbamoyl phosphate (CP) to the N(epsilon) atom of ornithine (ORN) to produce L-citrulline. This is Ornithine carbamoyltransferase from Methanobrevibacter smithii (strain ATCC 35061 / DSM 861 / OCM 144 / PS).